The following is a 233-amino-acid chain: Octanoyltransferase (233 aa).

One can recognise a BPL/LPL catalytic domain in the interval Gly-33–Gly-216. Substrate contacts are provided by residues Arg-71–His-78, Ala-146–Gly-148, and Gly-159–Ala-161. Cys-177 functions as the Acyl-thioester intermediate in the catalytic mechanism.

This sequence belongs to the LipB family.

The protein resides in the cytoplasm. It carries out the reaction octanoyl-[ACP] + L-lysyl-[protein] = N(6)-octanoyl-L-lysyl-[protein] + holo-[ACP] + H(+). The protein operates within protein modification; protein lipoylation via endogenous pathway; protein N(6)-(lipoyl)lysine from octanoyl-[acyl-carrier-protein]: step 1/2. In terms of biological role, catalyzes the transfer of endogenously produced octanoic acid from octanoyl-acyl-carrier-protein onto the lipoyl domains of lipoate-dependent enzymes. Lipoyl-ACP can also act as a substrate although octanoyl-ACP is likely to be the physiological substrate. This Clavibacter michiganensis subsp. michiganensis (strain NCPPB 382) protein is Octanoyltransferase.